The chain runs to 438 residues: Hydrogenobyrinate a,c-diamide synthase (438 aa).

The region spanning 247–438 is the GATase cobBQ-type domain; it reads RIALAEDAAF…TFFHAIAKGG (192 aa). Catalysis depends on Cys329, which acts as the Nucleophile.

Belongs to the CobB/CbiA family. It depends on Mg(2+) as a cofactor.

It carries out the reaction hydrogenobyrinate + 2 L-glutamine + 2 ATP + 2 H2O = hydrogenobyrinate a,c-diamide + 2 L-glutamate + 2 ADP + 2 phosphate + 2 H(+). The protein operates within cofactor biosynthesis; adenosylcobalamin biosynthesis; cob(II)yrinate a,c-diamide from precorrin-2 (aerobic route): step 9/10. Functionally, catalyzes the ATP-dependent amidation of the two carboxylate groups at positions a and c of hydrogenobyrinate, using either L-glutamine or ammonia as the nitrogen source. The sequence is that of Hydrogenobyrinate a,c-diamide synthase from Agrobacterium fabrum (strain C58 / ATCC 33970) (Agrobacterium tumefaciens (strain C58)).